A 147-amino-acid chain; its full sequence is uncharacterized protein (147 aa).

This is an uncharacterized protein from Saccharomyces cerevisiae (strain ATCC 204508 / S288c) (Baker's yeast).